The sequence spans 148 residues: Large ribosomal subunit protein bL9 (148 aa).

This sequence belongs to the bacterial ribosomal protein bL9 family.

In terms of biological role, binds to the 23S rRNA. This Geobacter sulfurreducens (strain ATCC 51573 / DSM 12127 / PCA) protein is Large ribosomal subunit protein bL9.